Here is a 246-residue protein sequence, read N- to C-terminus: 2-aminoethylphosphonate cytidylyltransferase (246 aa).

CMP-(2-aminoethyl)phosphonate is bound by residues alanine 19, glycine 20, lysine 34, serine 97, glutamate 114, and alanine 115. The Mg(2+) site is built by aspartate 116 and aspartate 145. 3 residues coordinate CMP-(2-aminoethyl)phosphonate: aspartate 145, lysine 161, and aspartate 202. Residues glutamate 226 and aspartate 228 each contribute to the Mg(2+) site.

It belongs to the LicC/PntC cytidylyltransferase family. As to quaternary structure, monomer. It depends on Mg(2+) as a cofactor.

The catalysed reaction is (2-aminoethyl)phosphonate + CTP = CMP-(2-aminoethyl)phosphonate + diphosphate. Its pathway is phosphorus metabolism; phosphonate biosynthesis. Its function is as follows. Cytidylyltransferase involved in the biosynthesis of cell-surface phosphonates. Catalyzes the activation of 2-aminoethylphosphonate (AEP) to CMP-2-aminoethylphosphonate (CMP-AEP). Can also use phosphocholine, with much lower efficiency. Exhibits strong activity towards CTP, limited activity towards ATP and no activity with GTP. The polypeptide is 2-aminoethylphosphonate cytidylyltransferase (Lancefieldella rimae (strain ATCC 49626 / DSM 7090 / CCUG 31168 / NBRC 15546 / VPI D140H-11A) (Atopobium rimae)).